The sequence spans 288 residues: Mycothiol S-conjugate amidase (288 aa).

3 residues coordinate Zn(2+): His-12, Asp-15, and His-142.

It belongs to the MshB deacetylase family. Mca subfamily. Monomer. Zn(2+) serves as cofactor.

The catalysed reaction is mycothiol S-conjugate + H2O = an N-acetyl-L-cysteine-S-conjugate + 1D-myo-inositol 2-amino-2-deoxy-alpha-D-glucopyranoside. Its activity is regulated as follows. Partially inhibited by MSH when MSmB is used as substrate. Competitively inhibited by the GlcNAc-cyclohexyl derivative 5-(4-chlorophenyl)-N-((2R,3R,4R,5S,6R)-2-(cyclohexylthio)-tetrahydro-4,5-dihydroxy-6-(hydroxymethyl)-2H-pyran-3-yl)furan-2-carboxamide, which also inhibits MshB. Functionally, a mycothiol (MSH, N-acetyl-cysteinyl-glucosaminyl-inositol) S-conjugate amidase, it recycles conjugated MSH to the N-acetyl cysteine conjugate and the MSH precursor. Involved in MSH-dependent detoxification of a number of alkylating agents and antibiotics. Activity is specific for the mycothiol moiety. Has a low but measurable deacetylation activity on GlcNAc-Ins (N-acetyl-glucosaminyl-inositol), and thus can also directly contribute to the production of MSH. The protein is Mycothiol S-conjugate amidase of Mycobacterium tuberculosis (strain ATCC 25618 / H37Rv).